A 251-amino-acid chain; its full sequence is Cell division protein ZapD (251 aa).

It belongs to the ZapD family. Interacts with FtsZ.

The protein resides in the cytoplasm. Functionally, cell division factor that enhances FtsZ-ring assembly. Directly interacts with FtsZ and promotes bundling of FtsZ protofilaments, with a reduction in FtsZ GTPase activity. This Burkholderia multivorans (strain ATCC 17616 / 249) protein is Cell division protein ZapD.